The following is a 230-amino-acid chain: Ribonuclease HII (230 aa).

The RNase H type-2 domain maps to 28–217 (FRIAGIDEAG…VKEHLPSQPD (190 aa)). A divalent metal cation is bound by residues Asp34, Glu35, and Asp126. The segment at 209-230 (KEHLPSQPDSDTAGPSTGLFSF) is disordered. The span at 215–230 (QPDSDTAGPSTGLFSF) shows a compositional bias: polar residues.

This sequence belongs to the RNase HII family. Mn(2+) serves as cofactor. It depends on Mg(2+) as a cofactor.

The protein resides in the cytoplasm. The enzyme catalyses Endonucleolytic cleavage to 5'-phosphomonoester.. Functionally, endonuclease that specifically degrades the RNA of RNA-DNA hybrids. The sequence is that of Ribonuclease HII from Citrifermentans bemidjiense (strain ATCC BAA-1014 / DSM 16622 / JCM 12645 / Bem) (Geobacter bemidjiensis).